The chain runs to 97 residues: Large ribosomal subunit protein uL23 (97 aa).

This sequence belongs to the universal ribosomal protein uL23 family. As to quaternary structure, part of the 50S ribosomal subunit. Contacts protein L29, and trigger factor when it is bound to the ribosome.

Functionally, one of the early assembly proteins it binds 23S rRNA. One of the proteins that surrounds the polypeptide exit tunnel on the outside of the ribosome. Forms the main docking site for trigger factor binding to the ribosome. This Limosilactobacillus fermentum (strain NBRC 3956 / LMG 18251) (Lactobacillus fermentum) protein is Large ribosomal subunit protein uL23.